The chain runs to 802 residues: Outer membrane usher protein CssD (802 aa).

Belongs to the fimbrial export usher family.

It localises to the cell outer membrane. In terms of biological role, involved in the export and assembly of C6 fimbrial subunits across the outer membrane. In Escherichia coli, this protein is Outer membrane usher protein CssD (cssD).